Consider the following 239-residue polypeptide: TPR repeat-containing protein TP_0282 (239 aa).

The helical transmembrane segment at 21-43 (LLVGVLVAILGGLGLSAGCLLVM) threads the bilayer. TPR repeat units follow at residues 112–145 (AYAQ…ARRS) and 149–182 (GVYY…QDFP).

The protein localises to the cell membrane. In Treponema pallidum (strain Nichols), this protein is TPR repeat-containing protein TP_0282.